The primary structure comprises 448 residues: Chromogranin-A (448 aa).

The first 18 residues, methionine 1 to alanine 18, serve as a signal peptide directing secretion. Cysteine 35 and cysteine 56 are disulfide-bonded. A disordered region spans residues leucine 116–tyrosine 251. 2 stretches are compositionally biased toward basic and acidic residues: residues alanine 129–glutamate 139 and glutamine 158–isoleucine 175. Phosphoserine is present on serine 197. The segment covering valine 205 to glutamate 222 has biased composition (basic and acidic residues). Positions glutamate 223–glycine 238 are enriched in acidic residues. Residues serine 258 and serine 288 each carry the phosphoserine modification. Residues leucine 263–serine 429 are disordered. Glycine amide is present on glycine 308. Residues lysine 310–glutamate 350 are compositionally biased toward basic and acidic residues. A phosphoserine mark is found at serine 311, serine 324, and serine 362. Methionine 363 carries the post-translational modification Methionine sulfoxide. Serine 389, serine 393, serine 415, and serine 429 each carry phosphoserine. Basic and acidic residues predominate over residues tyrosine 405 to aspartate 422. Serine 415 carries O-linked (Xyl...) (chondroitin sulfate) serine glycosylation.

Belongs to the chromogranin/secretogranin protein family. In terms of assembly, self-interacts; self-assembly is promoted in vitro by chondroitin sulfate attachment which occurs at mildly acidic pH conditions. Interacts with SCG3. Interacts with ITPR1 in the secretory granules. In terms of processing, O-glycosylated; contains chondroitin sulfate (CS). CS attachment is pH-dependent, being observed at mildly acidic conditions of pH 5 but not at neutral pH, and promotes self-assembly in vitro. In terms of tissue distribution, highly expressed in adrenal medulla and pituitary gland. Weaker expression detected in cerebrum, cerebellum, spinal cord, liver, thyroid gland, striated muscle, lung, spleen, kidney, parotid gland, and sublingual gland.

It is found in the secreted. The protein localises to the cytoplasmic vesicle. It localises to the secretory vesicle. Its subcellular location is the neuronal dense core vesicle. Its function is as follows. Strongly inhibits glucose induced insulin release from the pancreas. In terms of biological role, inhibits catecholamine release from chromaffin cells and noradrenergic neurons by acting as a non-competitive nicotinic cholinergic antagonist. Can induce mast cell migration, degranulation and production of cytokines and chemokines. Regulates granule biogenesis in endocrine cells by up-regulating the transcription of protease nexin 1 (SERPINE2) via a cAMP-PKA-SP1 pathway. This leads to inhibition of granule protein degradation in the Golgi complex which in turn promotes granule formation. The protein is Chromogranin-A (CHGA) of Equus caballus (Horse).